A 310-amino-acid polypeptide reads, in one-letter code: Transcription factor LRL2 (310 aa).

Low complexity-rich tracts occupy residues 1–20 (MNSS…LQSP) and 104–126 (QTQT…QPQT). Disordered regions lie at residues 1-23 (MNSS…PATF) and 95-143 (FHLP…PHSI). A basic motif; degenerate region spans residues 136-149 (QATDPHSIAERLRR). Residues 136–185 (QATDPHSIAERLRRERIAERMKSLQELVPNGNKTDKASMLDEIIDYVKFL) enclose the bHLH domain. The interval 150 to 185 (ERIAERMKSLQELVPNGNKTDKASMLDEIIDYVKFL) is helix-loop-helix motif. A disordered region spans residues 203-225 (ASSQISEDAGGSHENTSSSGEAK).

As to quaternary structure, homodimer. In terms of tissue distribution, expressed constitutively in roots, leaves, stems, and flowers.

The protein localises to the nucleus. Its function is as follows. Transcription factor that regulates the development of root hairs. Transcription factor that regulates the development of sperm cells. The chain is Transcription factor LRL2 from Arabidopsis thaliana (Mouse-ear cress).